The sequence spans 136 residues: UPF0213 protein AHA_3736 (136 aa).

Positions Ser17–Gln92 constitute a GIY-YIG domain. Residues Gln114–Asp136 are disordered. Basic and acidic residues predominate over residues Glu124 to Asp136.

Belongs to the UPF0213 family.

This Aeromonas hydrophila subsp. hydrophila (strain ATCC 7966 / DSM 30187 / BCRC 13018 / CCUG 14551 / JCM 1027 / KCTC 2358 / NCIMB 9240 / NCTC 8049) protein is UPF0213 protein AHA_3736.